The primary structure comprises 414 residues: Cytochrome P450 GfsF (414 aa).

The segment at 1 to 32 (MTDTTLVEAGDPAEDAPEWPMKRDTGCPFDPP) is disordered. The heme b site is built by histidine 75, histidine 107, arginine 111, arginine 303, histidine 361, and cysteine 363.

This sequence belongs to the cytochrome P450 family. As to quaternary structure, monomer. It depends on heme b as a cofactor.

It functions in the pathway antibiotic biosynthesis. Involved in the synthesis of the 16-membered macrolide antibiotics FD-891 and FD-892. Consecutively catalyzes epoxidation of C8-C9 and then hydroxylation at C10 to convert 25-O-methyl-FD-892 to FD-891. Consecutively catalyzes epoxidation of C8-C9 and then hydroxylation at C10 to convert 8,9-epoxy-FD-892 to 25-O-demethyl-FD-891 as well as converting 25-oxo-FD-892 to 8,9-epoxy-25-oxo-FD-892 and 8,9-epoxy-10-hydroxy-25-oxo-FD-892. In vitro is furnished with P.putida putidaredoxin and putidaredoxin reductase to provide the required two-electron reduction. The chain is Cytochrome P450 GfsF from Streptomyces halstedii.